The primary structure comprises 446 residues: Probable D-serine dehydratase (446 aa).

Lys-116 bears the N6-(pyridoxal phosphate)lysine mark.

Belongs to the serine/threonine dehydratase family. DsdA subfamily. Pyridoxal 5'-phosphate serves as cofactor.

The catalysed reaction is D-serine = pyruvate + NH4(+). This Bacillus anthracis (strain CDC 684 / NRRL 3495) protein is Probable D-serine dehydratase.